We begin with the raw amino-acid sequence, 373 residues long: UBX domain-containing protein 1 (373 aa).

Disordered regions lie at residues 39 to 179 (VTEF…QIPR) and 236 to 293 (IKQH…VDES). A compositionally biased stretch (polar residues) spans 49–59 (TAGSSEPTGQP). Composition is skewed to low complexity over residues 60 to 71 (SAKSSSSTPRES) and 85 to 94 (LGDLASGAAD). The segment covering 95 to 104 (SSDDDDDENQ) has biased composition (acidic residues). Over residues 121–132 (DDLKKKIIEKAR) the composition is skewed to basic and acidic residues. In terms of domain architecture, SEP spans 185 to 258 (LHFWADGFSV…KYQPFAGKGQ (74 aa)). In terms of domain architecture, UBX spans 292–369 (ESQPVVTLQI…PEFKRGGVVV (78 aa)).

Functionally, involved in CDC48-dependent protein degradation through the ubiquitin/proteasome pathway. This is UBX domain-containing protein 1 (ubx1) from Emericella nidulans (strain FGSC A4 / ATCC 38163 / CBS 112.46 / NRRL 194 / M139) (Aspergillus nidulans).